Reading from the N-terminus, the 163-residue chain is uncharacterized protein (163 aa).

This is an uncharacterized protein from Rickettsia conorii (strain ATCC VR-613 / Malish 7).